A 164-amino-acid chain; its full sequence is Bacterial microcompartment shell protein EutK (164 aa).

Residues 4–88 (ALGLLEVDGM…PEEDTQWLIG (85 aa)) enclose the BMC domain. Positions 108-164 (EFAEALLALLASVRQGMTAGEVAAHFGWPLEQARNVLEQLFSDGALRKRSSRYRIKN) constitute a EutK-Ctail domain.

This sequence belongs to the bacterial microcompartments protein family. In terms of assembly, monomeric in solution.

The protein localises to the bacterial microcompartment. It functions in the pathway amine and polyamine degradation; ethanolamine degradation. A component of the bacterial microcompartment (BMC) shell dedicated to ethanolamine degradation. Expression of eutK, eutL, eutM, eutN, eutS (eutSMNLK) in E.coli leads to formation of a single BMC. Coexpression of eutQ with eutSMNLK permits E.coli to make cells with more than one mobile BMC, as is usual in vivo. Its function is as follows. The ethanolamine (EA) catabolic bacterial microcompartment (BMC) probably concentrates low levels of ethanolamine catabolic enzymes, concentrates volatile reaction intermediates, keeps the level of toxic acetaldehyde low, generates enough acetyl-CoA to support cell growth, and maintains a pool of free coenzyme A (CoA) and NAD. Deletion of BMC genes (eutK, eutL, eutM) restores growth of eutD deletions, suggesting there are dedicated pools of coenzyme A (CoA) and NAD in the BMC. Functionally, expression of the eut operon allows this bacteria to use ethanolamine as a carbon, nitrogen and energy source. It relies on cobalamin (vitamin B12) both as a cofactor for the ethanolamine ammonia-lyase (EAL) activity and to induce the operon. EA enhances bacterial survival in macrophages in a concentration-dependent manner, suggesting it is an important nutrient during infection. This Salmonella typhimurium (strain LT2 / SGSC1412 / ATCC 700720) protein is Bacterial microcompartment shell protein EutK (eutK).